The sequence spans 216 residues: Vascular endothelial growth factor A (216 aa).

A signal peptide spans 1 to 26; sequence MNFLLTWIHWGLAALLYFHNAKVLQA. Intrachain disulfides connect Cys-52/Cys-94, Cys-83/Cys-128, and Cys-87/Cys-130. Asn-101 carries N-linked (GlcNAc...) asparagine glycosylation. Residues 140 to 161 form a disordered region; the sequence is QEKKSKREKGKGQKRKRKRGRY. Over residues 145–161 the composition is skewed to basic residues; the sequence is KREKGKGQKRKRKRGRY.

It belongs to the PDGF/VEGF growth factor family. Homodimer; disulfide-linked. Also found as heterodimer with PGF. Interacts to the FLT1/VEGFR1 and KDR/VEGFR2 receptors, heparan sulfate and heparin. As to expression, expressed in venom gland, heart, brain, liver, skeletal muscle and kidney.

It is found in the secreted. In terms of biological role, growth factor active in angiogenesis, vasculogenesis and endothelial cell growth. Induces endothelial cell proliferation, promotes cell migration, inhibits apoptosis and induces permeabilization of blood vessels. The chain is Vascular endothelial growth factor A from Protobothrops flavoviridis (Habu).